The sequence spans 171 residues: Large ribosomal subunit protein uL10 (171 aa).

It belongs to the universal ribosomal protein uL10 family. As to quaternary structure, part of the ribosomal stalk of the 50S ribosomal subunit. The N-terminus interacts with L11 and the large rRNA to form the base of the stalk. The C-terminus forms an elongated spine to which L12 dimers bind in a sequential fashion forming a multimeric L10(L12)X complex.

In terms of biological role, forms part of the ribosomal stalk, playing a central role in the interaction of the ribosome with GTP-bound translation factors. In Lactococcus lactis subsp. cremoris (strain SK11), this protein is Large ribosomal subunit protein uL10.